A 317-amino-acid chain; its full sequence is Inositol oxygenase 2 (317 aa).

Residues R57 and 115–117 contribute to the substrate site; that span reads DES. Residues H128, H153, and D154 each coordinate Fe cation. Substrate is bound by residues K157 and 174-175; that span reads GD. Fe cation contacts are provided by H226, H252, and D285. 252-253 serves as a coordination point for substrate; sequence HS.

The protein belongs to the myo-inositol oxygenase family. Requires Fe cation as cofactor. Expressed mainly in roots, stems, flowers and siliques. Low expression in leaves.

The protein resides in the cytoplasm. It catalyses the reaction myo-inositol + O2 = D-glucuronate + H2O + H(+). Its pathway is polyol metabolism; myo-inositol degradation into D-glucuronate; D-glucuronate from myo-inositol: step 1/1. Involved in the biosynthesis of UDP-glucuronic acid (UDP-GlcA), providing nucleotide sugars for cell-wall polymers. May be also involved in plant ascorbate biosynthesis. This is Inositol oxygenase 2 (MIOX2) from Arabidopsis thaliana (Mouse-ear cress).